The primary structure comprises 101 residues: Small ribosomal subunit protein uS14A (101 aa).

The protein belongs to the universal ribosomal protein uS14 family. As to quaternary structure, part of the 30S ribosomal subunit. Contacts proteins S3 and S10.

Binds 16S rRNA, required for the assembly of 30S particles and may also be responsible for determining the conformation of the 16S rRNA at the A site. The polypeptide is Small ribosomal subunit protein uS14A (Salinispora arenicola (strain CNS-205)).